Reading from the N-terminus, the 134-residue chain is uncharacterized protein (134 aa).

The first 16 residues, 1–16 (MAKAVALLLAAIAASA), serve as a signal peptide directing secretion.

This is an uncharacterized protein from Oryza sativa subsp. indica (Rice).